The primary structure comprises 456 residues: Bifunctional protein GlmU (456 aa).

Residues 1 to 229 (MLNSAMSVVI…ISETDGVNNR (229 aa)) are pyrophosphorylase. Residues 11–14 (LAAG), lysine 25, glutamine 76, 81–82 (GT), 103–105 (YGD), glycine 140, glutamate 154, asparagine 169, and asparagine 227 contribute to the UDP-N-acetyl-alpha-D-glucosamine site. Aspartate 105 serves as a coordination point for Mg(2+). A Mg(2+)-binding site is contributed by asparagine 227. A linker region spans residues 230 to 250 (LQLSRLERIYQAEQAEKLLLS). Residues 251–456 (GVMLRDPARF…QGWQRPVKKK (206 aa)) form an N-acetyltransferase region. Arginine 333 and lysine 351 together coordinate UDP-N-acetyl-alpha-D-glucosamine. The Proton acceptor role is filled by histidine 363. 2 residues coordinate UDP-N-acetyl-alpha-D-glucosamine: tyrosine 366 and asparagine 377. Residues alanine 380, 386 to 387 (NY), serine 405, alanine 423, and arginine 440 each bind acetyl-CoA.

In the N-terminal section; belongs to the N-acetylglucosamine-1-phosphate uridyltransferase family. The protein in the C-terminal section; belongs to the transferase hexapeptide repeat family. Homotrimer. Mg(2+) is required as a cofactor.

It localises to the cytoplasm. It catalyses the reaction alpha-D-glucosamine 1-phosphate + acetyl-CoA = N-acetyl-alpha-D-glucosamine 1-phosphate + CoA + H(+). The enzyme catalyses N-acetyl-alpha-D-glucosamine 1-phosphate + UTP + H(+) = UDP-N-acetyl-alpha-D-glucosamine + diphosphate. It participates in nucleotide-sugar biosynthesis; UDP-N-acetyl-alpha-D-glucosamine biosynthesis; N-acetyl-alpha-D-glucosamine 1-phosphate from alpha-D-glucosamine 6-phosphate (route II): step 2/2. It functions in the pathway nucleotide-sugar biosynthesis; UDP-N-acetyl-alpha-D-glucosamine biosynthesis; UDP-N-acetyl-alpha-D-glucosamine from N-acetyl-alpha-D-glucosamine 1-phosphate: step 1/1. The protein operates within bacterial outer membrane biogenesis; LPS lipid A biosynthesis. Its function is as follows. Catalyzes the last two sequential reactions in the de novo biosynthetic pathway for UDP-N-acetylglucosamine (UDP-GlcNAc). The C-terminal domain catalyzes the transfer of acetyl group from acetyl coenzyme A to glucosamine-1-phosphate (GlcN-1-P) to produce N-acetylglucosamine-1-phosphate (GlcNAc-1-P), which is converted into UDP-GlcNAc by the transfer of uridine 5-monophosphate (from uridine 5-triphosphate), a reaction catalyzed by the N-terminal domain. This is Bifunctional protein GlmU from Salmonella gallinarum (strain 287/91 / NCTC 13346).